A 962-amino-acid chain; its full sequence is Putative RNA Helicase B962L (962 aa).

The 187-residue stretch at 43–229 (IPTSLADRVL…FGIGKENIIL (187 aa)) folds into the Helicase ATP-binding domain. 56–63 (SRTGSGKS) serves as a coordination point for ATP. The DEAH box motif lies at 167-170 (DEAH). In terms of domain architecture, Helicase C-terminal spans 253–459 (ACETALTIHK…TIKKNKEGVF (207 aa)). Residues 521-541 (GYFWQAAISDIATILAVVSVA) form a helical membrane-spanning segment.

Belongs to the DEAD box helicase family. DEAH subfamily.

It is found in the host membrane. The protein localises to the virion. The enzyme catalyses ATP + H2O = ADP + phosphate + H(+). In African swine fever virus (isolate Tick/South Africa/Pretoriuskop Pr4/1996) (ASFV), this protein is Putative RNA Helicase B962L.